Consider the following 464-residue polypeptide: Glutamate--tRNA ligase (464 aa).

The short motif at 9 to 19 (PSPTGYLHIGG) is the 'HIGH' region element. Residues 242–246 (KISKR) carry the 'KMSKS' region motif. Lys-245 lines the ATP pocket.

Belongs to the class-I aminoacyl-tRNA synthetase family. Glutamate--tRNA ligase type 1 subfamily. Monomer.

The protein localises to the cytoplasm. The catalysed reaction is tRNA(Glu) + L-glutamate + ATP = L-glutamyl-tRNA(Glu) + AMP + diphosphate. Catalyzes the attachment of glutamate to tRNA(Glu) in a two-step reaction: glutamate is first activated by ATP to form Glu-AMP and then transferred to the acceptor end of tRNA(Glu). The polypeptide is Glutamate--tRNA ligase (Neisseria gonorrhoeae (strain NCCP11945)).